The primary structure comprises 340 residues: Aliphatic sulfonates import ATP-binding protein SsuB 1 (340 aa).

Residues 44 to 72 form a disordered region; the sequence is THHHARVAAQGHARGDAQPPAGALARDDG. The 220-residue stretch at 80 to 299 folds into the ABC transporter domain; the sequence is VQLRGVGKRY…ARASAGFAAL (220 aa). 112-119 contributes to the ATP binding site; sequence GRSGCGKS.

The protein belongs to the ABC transporter superfamily. Aliphatic sulfonates importer (TC 3.A.1.17.2) family. In terms of assembly, the complex is composed of two ATP-binding proteins (SsuB), two transmembrane proteins (SsuC) and a solute-binding protein (SsuA).

It is found in the cell inner membrane. It carries out the reaction ATP + H2O + aliphatic sulfonate-[sulfonate-binding protein]Side 1 = ADP + phosphate + aliphatic sulfonateSide 2 + [sulfonate-binding protein]Side 1.. In terms of biological role, part of the ABC transporter complex SsuABC involved in aliphatic sulfonates import. Responsible for energy coupling to the transport system. The sequence is that of Aliphatic sulfonates import ATP-binding protein SsuB 1 from Paraburkholderia xenovorans (strain LB400).